We begin with the raw amino-acid sequence, 90 residues long: Small ribosomal subunit protein uS15c (90 aa).

This sequence belongs to the universal ribosomal protein uS15 family. Part of the 30S ribosomal subunit.

Its subcellular location is the plastid. The protein localises to the chloroplast. The sequence is that of Small ribosomal subunit protein uS15c (rps15) from Liriodendron tulipifera (Tuliptree).